Here is a 290-residue protein sequence, read N- to C-terminus: Endoplasmic reticulum-Golgi intermediate compartment protein 1 (290 aa).

The Cytoplasmic portion of the chain corresponds to 1 to 26 (MPFDFRRFDIYRKVPKDLTQPTYTGA). Residues 27 to 47 (IISICCCLFILFLFLSELTGF) traverse the membrane as a helical segment. Residues 48 to 254 (ITTEVVNELY…RRQPLYRFIT (207 aa)) are Lumenal-facing. Asn74 carries N-linked (GlcNAc...) asparagine glycosylation. A helical transmembrane segment spans residues 255 to 275 (TICAIIGGTFTVAGILDSCIF). The Cytoplasmic portion of the chain corresponds to 276 to 290 (TASEAWKKIQLGKIH).

Belongs to the ERGIC family. As to quaternary structure, may form a heteromeric complex composed of ERGIC1, ERGIC2 and ERGIC3. Within the complex, the interaction with ERGIC3 is direct. Interacts with ERGIC3/ERV46. Post-translationally, N-glycosylated.

The protein localises to the endoplasmic reticulum membrane. Its subcellular location is the endoplasmic reticulum-Golgi intermediate compartment membrane. It localises to the golgi apparatus membrane. In terms of biological role, possible role in transport between endoplasmic reticulum and Golgi. In Mus musculus (Mouse), this protein is Endoplasmic reticulum-Golgi intermediate compartment protein 1 (Ergic1).